The following is a 1138-amino-acid chain: Pesticidal crystal protein Cry7Aa (1138 aa).

It belongs to the delta endotoxin family.

Its function is as follows. Promotes colloidosmotic lysis by binding to the midgut epithelial cells of Coleoptera. This protein is not toxic in its natural form. It is highly toxic to Colorado potato beetle larvae after an in vitro solubilization and trypsin activation step. The chain is Pesticidal crystal protein Cry7Aa (cry7Aa) from Bacillus thuringiensis.